An 809-amino-acid polypeptide reads, in one-letter code: Lon protease (809 aa).

Residues 8–203 (LPVVALRNMA…RLCLILADEI (196 aa)) enclose the Lon N-terminal domain. An ATP-binding site is contributed by 354 to 361 (GPPGTGKT). Residues 629-809 (KDEVGIVCGL…MDEVLKHALV (181 aa)) form the Lon proteolytic domain. Catalysis depends on residues Ser-716 and Lys-759.

Belongs to the peptidase S16 family. In terms of assembly, homohexamer. Organized in a ring with a central cavity.

The protein resides in the cytoplasm. The catalysed reaction is Hydrolysis of proteins in presence of ATP.. Functionally, ATP-dependent serine protease that mediates the selective degradation of mutant and abnormal proteins as well as certain short-lived regulatory proteins. Required for cellular homeostasis and for survival from DNA damage and developmental changes induced by stress. Degrades polypeptides processively to yield small peptide fragments that are 5 to 10 amino acids long. Binds to DNA in a double-stranded, site-specific manner. In Lachnoclostridium phytofermentans (strain ATCC 700394 / DSM 18823 / ISDg) (Clostridium phytofermentans), this protein is Lon protease.